We begin with the raw amino-acid sequence, 74 residues long: Translation initiation factor IF-1 (74 aa).

In terms of domain architecture, S1-like spans 1–72 (MADTEKLKML…TRGRITYRHR (72 aa)).

Belongs to the IF-1 family. As to quaternary structure, component of the 30S ribosomal translation pre-initiation complex which assembles on the 30S ribosome in the order IF-2 and IF-3, IF-1 and N-formylmethionyl-tRNA(fMet); mRNA recruitment can occur at any time during PIC assembly.

Its subcellular location is the cytoplasm. One of the essential components for the initiation of protein synthesis. Stabilizes the binding of IF-2 and IF-3 on the 30S subunit to which N-formylmethionyl-tRNA(fMet) subsequently binds. Helps modulate mRNA selection, yielding the 30S pre-initiation complex (PIC). Upon addition of the 50S ribosomal subunit IF-1, IF-2 and IF-3 are released leaving the mature 70S translation initiation complex. The protein is Translation initiation factor IF-1 of Ureaplasma parvum serovar 3 (strain ATCC 700970).